Consider the following 189-residue polypeptide: Shikimate kinase (189 aa).

11-16 (GTGKSA) contributes to the ATP binding site. Ser15 contributes to the Mg(2+) binding site. Positions 33, 57, and 79 each coordinate substrate. Arg117 serves as a coordination point for ATP. Substrate is bound at residue Arg135.

Belongs to the shikimate kinase family. In terms of assembly, monomer. Requires Mg(2+) as cofactor.

It localises to the cytoplasm. The catalysed reaction is shikimate + ATP = 3-phosphoshikimate + ADP + H(+). It participates in metabolic intermediate biosynthesis; chorismate biosynthesis; chorismate from D-erythrose 4-phosphate and phosphoenolpyruvate: step 5/7. Functionally, catalyzes the specific phosphorylation of the 3-hydroxyl group of shikimic acid using ATP as a cosubstrate. The sequence is that of Shikimate kinase from Desulforudis audaxviator (strain MP104C).